The chain runs to 321 residues: Putative membrane-bound redox modulator Alx (321 aa).

Over Met1–Thr6 the chain is Periplasmic. A helical transmembrane segment spans residues Pro7–Leu27. The Cytoplasmic segment spans residues Gln28–Ala43. A helical membrane pass occupies residues Trp44 to Val64. Over Gln65–Leu89 the chain is Periplasmic. Residues Ala90–Leu110 form a helical membrane-spanning segment. At Gln111–Arg113 the chain is on the cytoplasmic side. Residues Val114 to Ser134 form a helical membrane-spanning segment. Trp135 is a topological domain (periplasmic). Residues Leu136–Val156 traverse the membrane as a helical segment. Topologically, residues Lys157–Gly198 are cytoplasmic. The helical transmembrane segment at Leu199 to Phe219 threads the bilayer. Topologically, residues Ala220–Pro225 are periplasmic. A helical membrane pass occupies residues Ala226–Leu246. The Cytoplasmic portion of the chain corresponds to Gly247–Arg261. A helical transmembrane segment spans residues Phe262–Ile282. Residues Val283–Tyr286 are Periplasmic-facing. The helical transmembrane segment at His287 to Ile307 threads the bilayer. The Cytoplasmic segment spans residues Asn308–Glu321.

The protein belongs to the TerC family.

The protein localises to the cell inner membrane. Functionally, has been proposed to be a redox modulator. This chain is Putative membrane-bound redox modulator Alx (alx), found in Escherichia coli O6:H1 (strain CFT073 / ATCC 700928 / UPEC).